A 386-amino-acid chain; its full sequence is Succinate--CoA ligase [ADP-forming] subunit beta (386 aa).

The region spanning 9–244 is the ATP-grasp domain; the sequence is KEVLRKYGVA…LDEEDPKEIE (236 aa). ATP contacts are provided by residues Lys46, 53-55, Glu99, Cys102, and Glu107; that span reads GRG. 2 residues coordinate Mg(2+): Asn199 and Asp213. Substrate contacts are provided by residues Asn264 and 321–323; that span reads GIM.

It belongs to the succinate/malate CoA ligase beta subunit family. As to quaternary structure, heterotetramer of two alpha and two beta subunits. The cofactor is Mg(2+).

It carries out the reaction succinate + ATP + CoA = succinyl-CoA + ADP + phosphate. The enzyme catalyses GTP + succinate + CoA = succinyl-CoA + GDP + phosphate. The protein operates within carbohydrate metabolism; tricarboxylic acid cycle; succinate from succinyl-CoA (ligase route): step 1/1. Functionally, succinyl-CoA synthetase functions in the citric acid cycle (TCA), coupling the hydrolysis of succinyl-CoA to the synthesis of either ATP or GTP and thus represents the only step of substrate-level phosphorylation in the TCA. The beta subunit provides nucleotide specificity of the enzyme and binds the substrate succinate, while the binding sites for coenzyme A and phosphate are found in the alpha subunit. In Bacillus licheniformis (strain ATCC 14580 / DSM 13 / JCM 2505 / CCUG 7422 / NBRC 12200 / NCIMB 9375 / NCTC 10341 / NRRL NRS-1264 / Gibson 46), this protein is Succinate--CoA ligase [ADP-forming] subunit beta.